A 204-amino-acid polypeptide reads, in one-letter code: Protein GrpE (204 aa).

2 stretches are compositionally biased toward basic and acidic residues: residues 1–21 (MEELEKDKIERNEEMSEEVKG) and 36–46 (EEKIETEVEQK). The disordered stretch occupies residues 1–46 (MEELEKDKIERNEEMSEEVKGEGPPSELEQSEEVVEEKIETEVEQK).

The protein belongs to the GrpE family. In terms of assembly, homodimer.

It localises to the cytoplasm. In terms of biological role, participates actively in the response to hyperosmotic and heat shock by preventing the aggregation of stress-denatured proteins, in association with DnaK and GrpE. It is the nucleotide exchange factor for DnaK and may function as a thermosensor. Unfolded proteins bind initially to DnaJ; upon interaction with the DnaJ-bound protein, DnaK hydrolyzes its bound ATP, resulting in the formation of a stable complex. GrpE releases ADP from DnaK; ATP binding to DnaK triggers the release of the substrate protein, thus completing the reaction cycle. Several rounds of ATP-dependent interactions between DnaJ, DnaK and GrpE are required for fully efficient folding. In Caldanaerobacter subterraneus subsp. tengcongensis (strain DSM 15242 / JCM 11007 / NBRC 100824 / MB4) (Thermoanaerobacter tengcongensis), this protein is Protein GrpE.